We begin with the raw amino-acid sequence, 24 residues long: Formate ester dehydrogenase gamma chain (24 aa).

As to quaternary structure, heterotrimer composed of an alpha, a beta and a gamma chain.

This is Formate ester dehydrogenase gamma chain from Amycolatopsis methanolica.